A 143-amino-acid chain; its full sequence is Transcriptional regulator MraZ (143 aa).

2 SpoVT-AbrB domains span residues Glu-5–Glu-47 and Ala-76–Leu-119.

It belongs to the MraZ family. As to quaternary structure, forms oligomers.

Its subcellular location is the cytoplasm. It localises to the nucleoid. This Halalkalibacterium halodurans (strain ATCC BAA-125 / DSM 18197 / FERM 7344 / JCM 9153 / C-125) (Bacillus halodurans) protein is Transcriptional regulator MraZ.